We begin with the raw amino-acid sequence, 227 residues long: tRNA (guanine-N(7)-)-methyltransferase (227 aa).

The segment at 1–21 (MPDMTMKSQPDRLYGRQRGHA) is disordered. Glu-54, Glu-79, Asp-114, and Asp-136 together coordinate S-adenosyl-L-methionine. Residue Asp-136 is part of the active site. Residues Lys-140, Asp-172, and 206–209 (TRYE) each bind substrate.

It belongs to the class I-like SAM-binding methyltransferase superfamily. TrmB family.

The enzyme catalyses guanosine(46) in tRNA + S-adenosyl-L-methionine = N(7)-methylguanosine(46) in tRNA + S-adenosyl-L-homocysteine. The protein operates within tRNA modification; N(7)-methylguanine-tRNA biosynthesis. Catalyzes the formation of N(7)-methylguanine at position 46 (m7G46) in tRNA. The sequence is that of tRNA (guanine-N(7)-)-methyltransferase from Granulibacter bethesdensis (strain ATCC BAA-1260 / CGDNIH1).